The following is a 101-amino-acid chain: Large ribosomal subunit protein bL21 (101 aa).

Belongs to the bacterial ribosomal protein bL21 family. Part of the 50S ribosomal subunit. Contacts protein L20.

Functionally, this protein binds to 23S rRNA in the presence of protein L20. In Corynebacterium efficiens (strain DSM 44549 / YS-314 / AJ 12310 / JCM 11189 / NBRC 100395), this protein is Large ribosomal subunit protein bL21.